A 1574-amino-acid polypeptide reads, in one-letter code: Myosin-2 (1574 aa).

S2 carries the post-translational modification N-acetylserine. The region spanning 4-57 (EVGTRCWYPHKELGWIGAEVIKNEFNDGKYHLELQLEDDEIVSVDTKDLNNDKD) is the Myosin N-terminal SH3-like domain. Residues 70 to 781 (EATEDLTSLS…MLAYLEKLRS (712 aa)) enclose the Myosin motor domain. 164–171 (GESGAGKT) is an ATP binding site. Positions 443-523 (FIGVLDIYGF…LGILSLLDEE (81 aa)) are actin-binding. IQ domains follow at residues 784-806 (MHNS…QYLQ), 807-831 (ISQA…NDEM), 832-855 (KVNC…VFSV), 856-879 (LRTI…KQEH), 880-902 (EYNA…RFLR), and 903-932 (TKKD…DAKS). Residues 933 to 1088 (VNHLKEVSYK…RLQTAMSLGT (156 aa)) adopt a coiled-coil conformation. A non alpha-helical, tail domain region spans residues 1087–1574 (GTVTTSVLPQ…VAQQVVQDGH (488 aa)). Position 1097 is a phosphothreonine (T1097). A Phosphoserine modification is found at S1121. The 276-residue stretch at 1226–1501 (AQVLTTIQKV…LRYVADIVKK (276 aa)) folds into the Dilute domain.

Belongs to the TRAFAC class myosin-kinesin ATPase superfamily. Myosin family. As to quaternary structure, homodimer. Interacts with calmodulin (CMD1) and the myosin light chain MLC1 through its IQ repeats. Binds to the membrane receptors SEC4 and VAC17 to transport secretory vesicles and the vacuole, respectively. Binds to KAR9, which transports BIM1-coated cytoplasmic microtubules that are attached to the spindle pole body into the emerging bud, thereby correctly orienting the mitotic spindle. Interacts with YPT11 and MMR1 to accelerate mitochondrial distribution to the bud. Interacts with SHE4 and localizes it to the bud tip. Interacts with RHO3 and SMY1, putative regulators of MYO2 function. Interacts with SRO7.

It localises to the bud neck. It is found in the bud tip. Its function is as follows. Myosin heavy chain that is required for the cell cycle-regulated transport of various organelles and proteins for their segregation. Functions by binding with its tail domain to receptor proteins on organelles and exerting force with its N-terminal motor domain against actin filaments, thereby transporting its cargo along polarized actin cables. Essential for the delivery of secretory vesicles to sites of active growth during bud emergence and cytokinesis. Required for segregation and inheritance of peroxisomes, late Golgi compartments, mitochondria and the vacuole to the daughter cell during cell division. Also required for correct alignment of the spindle during mitosis. This Saccharomyces cerevisiae (strain ATCC 204508 / S288c) (Baker's yeast) protein is Myosin-2 (MYO2).